Here is a 191-residue protein sequence, read N- to C-terminus: Thymidylate kinase (191 aa).

7-14 contributes to the ATP binding site; sequence GVDGAGKS.

This sequence belongs to the thymidylate kinase family.

The enzyme catalyses dTMP + ATP = dTDP + ADP. In terms of biological role, phosphorylation of dTMP to form dTDP in both de novo and salvage pathways of dTTP synthesis. The chain is Thymidylate kinase (tmk) from Helicobacter pylori (strain ATCC 700392 / 26695) (Campylobacter pylori).